Reading from the N-terminus, the 295-residue chain is Protoheme IX farnesyltransferase (295 aa).

9 helical membrane-spanning segments follow: residues 31–51 (GLVM…IGAA), 54–74 (VLTV…NCYL), 98–118 (FVAL…LSLA), 121–141 (GLTA…YTPM), 147–167 (TALF…WTSV), 173–193 (AGGL…FLAI), 220–240 (LWMA…VPLG), 245–265 (GYAI…ISGI), and 273–293 (ARTF…ALFL).

This sequence belongs to the UbiA prenyltransferase family. Protoheme IX farnesyltransferase subfamily.

The protein localises to the cell inner membrane. The catalysed reaction is heme b + (2E,6E)-farnesyl diphosphate + H2O = Fe(II)-heme o + diphosphate. The protein operates within porphyrin-containing compound metabolism; heme O biosynthesis; heme O from protoheme: step 1/1. Its function is as follows. Converts heme B (protoheme IX) to heme O by substitution of the vinyl group on carbon 2 of heme B porphyrin ring with a hydroxyethyl farnesyl side group. The protein is Protoheme IX farnesyltransferase of Anaeromyxobacter dehalogenans (strain 2CP-C).